Here is a 283-residue protein sequence, read N- to C-terminus: Bifunctional protein FolD (283 aa).

166–168 provides a ligand contact to NADP(+); the sequence is GAS.

Belongs to the tetrahydrofolate dehydrogenase/cyclohydrolase family. As to quaternary structure, homodimer.

The enzyme catalyses (6R)-5,10-methylene-5,6,7,8-tetrahydrofolate + NADP(+) = (6R)-5,10-methenyltetrahydrofolate + NADPH. It catalyses the reaction (6R)-5,10-methenyltetrahydrofolate + H2O = (6R)-10-formyltetrahydrofolate + H(+). Its pathway is one-carbon metabolism; tetrahydrofolate interconversion. Functionally, catalyzes the oxidation of 5,10-methylenetetrahydrofolate to 5,10-methenyltetrahydrofolate and then the hydrolysis of 5,10-methenyltetrahydrofolate to 10-formyltetrahydrofolate. This is Bifunctional protein FolD from Coxiella burnetii (strain CbuG_Q212) (Coxiella burnetii (strain Q212)).